The primary structure comprises 726 residues: Catalase-peroxidase (726 aa).

The segment at 1–33 is disordered; that stretch reads MSTSDDIHNTTATGKCPFHQGGHDQSAGAGTTT. The segment at residues 105–226 is a cross-link (tryptophyl-tyrosyl-methioninium (Trp-Tyr) (with M-252)); that stretch reads WHGAGTYRSI…LGATEMGLIY (122 aa). The active-site Proton acceptor is H106. The segment at residues 226–252 is a cross-link (tryptophyl-tyrosyl-methioninium (Tyr-Met) (with W-105)); that stretch reads YVNPEGPDHSGEPLSAAAAIRATFGNM. Residue H267 coordinates heme b.

The protein belongs to the peroxidase family. Peroxidase/catalase subfamily. In terms of assembly, homodimer or homotetramer. Requires heme b as cofactor. Post-translationally, formation of the three residue Trp-Tyr-Met cross-link is important for the catalase, but not the peroxidase activity of the enzyme.

The enzyme catalyses H2O2 + AH2 = A + 2 H2O. The catalysed reaction is 2 H2O2 = O2 + 2 H2O. In terms of biological role, bifunctional enzyme with both catalase and broad-spectrum peroxidase activity. The sequence is that of Catalase-peroxidase from Shigella sonnei (strain Ss046).